The sequence spans 527 residues: MNEELNSWDKFCNYLWFDKKLNIWLDISKIIFTNDDIVTLEEKFTDVLSSIKELENGAISNIDENRQVGHYWLRNPSISPSSNIGEEISADINEISEFGKQILNGNIKNKNNQKYTDVLWIGIGGSGLGPLLITESLQKCSKGLNFSYIDNVDPFLISEKLEELAEKLSTTLFVVVSKSGGTPEPRIAMEIIKSHCENNSLEWNSNAIAITMKDSKLFNKAISENWLKIFNLQDWVGGRTSITSSVGLLPLALINENIFEFIRGASLMDEATRTSDFKNNPAALLSSAWYLTGDGVGKRDMVVLPYRDRLQVFSKYLQQLVMESLGKKFNRNGEVVNQGISVFGNKGSTDQHAYVQQLRDGIDNFFCIFIELLDSPSTNIFDGKENPKEYLSGFLQGTRSALSSENRQSITITLEKLNCFSLGALIALFERSVSFYAELVNINAYDQPGVEAGKKAAANIIDYQQKVSNLLEKGGEYSINEITSLIDNSVSEPIFFILREMCFGNEDYLVKGDWSNPNSLVIQKRNS.

Residue glutamate 323 is the Proton donor of the active site. Active-site residues include histidine 352 and lysine 454.

This sequence belongs to the GPI family.

It is found in the cytoplasm. The enzyme catalyses alpha-D-glucose 6-phosphate = beta-D-fructose 6-phosphate. It functions in the pathway carbohydrate biosynthesis; gluconeogenesis. The protein operates within carbohydrate degradation; glycolysis; D-glyceraldehyde 3-phosphate and glycerone phosphate from D-glucose: step 2/4. In terms of biological role, catalyzes the reversible isomerization of glucose-6-phosphate to fructose-6-phosphate. In Prochlorococcus marinus (strain MIT 9312), this protein is Glucose-6-phosphate isomerase.